The primary structure comprises 215 residues: Probable GTP-binding protein EngB (215 aa).

The EngB-type G domain occupies 31–215 (GPPEIAFAGR…RAAILQAIAV (185 aa)). Residues 39–46 (GRSNVGKS), 66–70 (GRTQE), 93–96 (DMPG), 160–163 (TKSD), and 194–196 (TSS) contribute to the GTP site. The Mg(2+) site is built by S46 and T68.

It belongs to the TRAFAC class TrmE-Era-EngA-EngB-Septin-like GTPase superfamily. EngB GTPase family. It depends on Mg(2+) as a cofactor.

Its function is as follows. Necessary for normal cell division and for the maintenance of normal septation. In Bartonella quintana (strain Toulouse) (Rochalimaea quintana), this protein is Probable GTP-binding protein EngB.